A 442-amino-acid chain; its full sequence is Hydroxycinnamoyltransferase 1 (442 aa).

Residues histidine 159 and aspartate 389 each act as proton acceptor in the active site.

Belongs to the plant acyltransferase family. Expressed in roots, leaves, stems and seeds.

Its function is as follows. Hydroxycinnamoyl transferase that catalyzes the transfer of an acyl from p-coumaryol-CoA to various acyl acceptors. Can use feruloyl-CoA and caffeoyl-CoA as acyl donors. The polypeptide is Hydroxycinnamoyltransferase 1 (Oryza sativa subsp. japonica (Rice)).